Consider the following 120-residue polypeptide: MLQQESRIRVADNSGAKEVLLIRVLGGKKYAYIGDTIIVSIKEAIAGSSVKKGQLYKAVVVRTKKKIRRKDGSYIRFDDNACVLLTNTGEMKGTRILGPVSRELRDKEYTKIVSLATEVL.

It belongs to the universal ribosomal protein uL14 family. As to quaternary structure, part of the 50S ribosomal subunit. Forms a cluster with proteins L3 and L19. In the 70S ribosome, L14 and L19 interact and together make contacts with the 16S rRNA in bridges B5 and B8.

Functionally, binds to 23S rRNA. Forms part of two intersubunit bridges in the 70S ribosome. The polypeptide is Large ribosomal subunit protein uL14 (Karelsulcia muelleri (strain GWSS) (Sulcia muelleri)).